A 1969-amino-acid chain; its full sequence is Myosin-3 (1969 aa).

The region spanning 33–82 (DSKKNCWIPDPEDGFVAAEIQSTTGDQVTVVTVKGNQITVKKDQCQEMNP) is the Myosin N-terminal SH3-like domain. The 706-residue stretch at 86-791 (DKTEDMANLT…VLAKLEDLRD (706 aa)) folds into the Myosin motor domain. Lys-130 is modified (N6,N6,N6-trimethyllysine). An ATP-binding site is contributed by 179–186 (GESGAGKT). Actin-binding regions lie at residues 667 to 689 (LNNL…IPNE) and 770 to 784 (KIGE…GVLA). The region spanning 794-823 (LSRIVTMFQSRIRSYLAKAEVRRRYEQQTG) is the IQ domain. The stretch at 853–1941 (LKAGKEQEAM…KMRNKIRASA (1089 aa)) forms a coiled coil. Disordered regions lie at residues 943–967 (QERH…KKHV), 993–1029 (DEMA…EEDK), and 1134–1153 (ELES…NELQ). 2 stretches are compositionally biased toward basic and acidic residues: residues 1001–1029 (SVAK…EEDK) and 1137–1153 (SERN…NELQ).

The protein belongs to the TRAFAC class myosin-kinesin ATPase superfamily. Myosin family. As to quaternary structure, muscle myosin is a hexameric protein that consists of 2 heavy chain subunits (MHC), 2 alkali light chain subunits (MLC) and 2 regulatory light chain subunits (MLC-2).

Its subcellular location is the cytoplasm. It is found in the myofibril. The protein resides in the sarcomere. The protein localises to the a band. Its function is as follows. Essential for muscle contraction. Involved in ovulation likely by regulating the contraction of gonadal myoepithelial sheath cells. The chain is Myosin-3 from Caenorhabditis briggsae.